We begin with the raw amino-acid sequence, 432 residues long: Nuclear pore complex-interacting protein family member B8 (432 aa).

Disordered regions lie at residues 260–280 and 353–420; these read RMGR…NSLS and SPLP…LRTR. A compositionally biased stretch (polar residues) spans 270–280; that stretch reads QQHSITDNSLS. Residues 374-402 show a composition bias toward basic and acidic residues; the sequence is EVEKPPKPKRWRVDEVEQSPKPKRQREAE. Over residues 408 to 420 the composition is skewed to basic residues; it reads KPKRRRLSKLRTR.

The protein belongs to the NPIP family.

The chain is Nuclear pore complex-interacting protein family member B8 (NPIPB8) from Homo sapiens (Human).